The sequence spans 164 residues: Reticulon-like protein B22 (164 aa).

The region spanning 1–164 (MGEMGKAMGL…ILEQEAHSDT (164 aa)) is the Reticulon domain. A run of 2 helical transmembrane segments spans residues 30-50 (SLFS…GLLF) and 117-137 (LISG…SMLC).

It is found in the endoplasmic reticulum membrane. The chain is Reticulon-like protein B22 (RTNLB22) from Arabidopsis thaliana (Mouse-ear cress).